The chain runs to 615 residues: Isocitrate dehydrogenase kinase/phosphatase (615 aa).

ATP-binding positions include 325–331 (APGIKGM) and lysine 346. Aspartate 381 is an active-site residue.

Belongs to the AceK family.

The protein localises to the cytoplasm. It catalyses the reaction L-seryl-[isocitrate dehydrogenase] + ATP = O-phospho-L-seryl-[isocitrate dehydrogenase] + ADP + H(+). Functionally, bifunctional enzyme which can phosphorylate or dephosphorylate isocitrate dehydrogenase (IDH) on a specific serine residue. This is a regulatory mechanism which enables bacteria to bypass the Krebs cycle via the glyoxylate shunt in response to the source of carbon. When bacteria are grown on glucose, IDH is fully active and unphosphorylated, but when grown on acetate or ethanol, the activity of IDH declines drastically concomitant with its phosphorylation. The protein is Isocitrate dehydrogenase kinase/phosphatase of Albidiferax ferrireducens (strain ATCC BAA-621 / DSM 15236 / T118) (Rhodoferax ferrireducens).